The sequence spans 500 residues: Protein nucleotidyltransferase YdiU (500 aa).

Gly-96, Gly-98, Arg-99, Lys-119, Asp-131, Gly-132, Arg-182, and Arg-189 together coordinate ATP. Residue Asp-258 is the Proton acceptor of the active site. Asn-259 and Asp-268 together coordinate Mg(2+). Asp-268 contacts ATP.

Belongs to the SELO family. It depends on Mg(2+) as a cofactor. Mn(2+) serves as cofactor.

It catalyses the reaction L-seryl-[protein] + ATP = 3-O-(5'-adenylyl)-L-seryl-[protein] + diphosphate. It carries out the reaction L-threonyl-[protein] + ATP = 3-O-(5'-adenylyl)-L-threonyl-[protein] + diphosphate. The enzyme catalyses L-tyrosyl-[protein] + ATP = O-(5'-adenylyl)-L-tyrosyl-[protein] + diphosphate. The catalysed reaction is L-histidyl-[protein] + UTP = N(tele)-(5'-uridylyl)-L-histidyl-[protein] + diphosphate. It catalyses the reaction L-seryl-[protein] + UTP = O-(5'-uridylyl)-L-seryl-[protein] + diphosphate. It carries out the reaction L-tyrosyl-[protein] + UTP = O-(5'-uridylyl)-L-tyrosyl-[protein] + diphosphate. Its function is as follows. Nucleotidyltransferase involved in the post-translational modification of proteins. It can catalyze the addition of adenosine monophosphate (AMP) or uridine monophosphate (UMP) to a protein, resulting in modifications known as AMPylation and UMPylation. This is Protein nucleotidyltransferase YdiU from Rhizobium leguminosarum bv. trifolii (strain WSM2304).